A 98-amino-acid chain; its full sequence is Feather beta keratin (98 aa).

An N-acetylserine modification is found at S2.

This sequence belongs to the avian keratin family. The avian keratins (F-ker, S-ker, C-ker and B-ker) are a complex mixture of very similar polypeptides.

This Cathartes aura (Turkey vulture) protein is Feather beta keratin.